An 870-amino-acid chain; its full sequence is MASASSSRAGVALPFEKSQLTLKVVSAKPKVHNRQPRINSYVEVAVDGLPSETKKTGKRIGSSELLWNEIIILNVTAQSHLDLKVWSCHTLRNELLGTASVNLSNVLKNNGGKMENMQLTLNLQTENKGSVVSGGELTIFLDGPTVDLGNVPNGSALTDGSQLPSRDSSGTAVAPENRHQPPSTNCFGGRSRTHRHSGASARTTPATGEQSPGARSRHRQPVKNSGHSGLANGTVNDEPTTATDPEEPSVVGVTSPPAAPLSVTPNPNTTSLPAPATPAEGEEPSTSGTQQLPAAAQAPDALPAGWEQRELPNGRVYYVDHNTKTTTWERPLPPGWEKRTDPRGRFYYVDHNTRTTTWQRPTAEYVRNYEQWQSQRNQLQGAMQHFSQRFLYQSSSASTDHDPLGPLPPGWEKRQDNGRVYYVNHNTRTTQWEDPRTQGMIQEPALPPGWEMKYTSEGVRYFVDHNTRTTTFKDPRPGFESGTKQGSPGAYDRSFRWKYHQFRFLCHSNALPSHVKISVSRQTLFEDSFQQIMNMKPYDLRRRLYIIMRGEEGLDYGGIAREWFFLLSHEVLNPMYCLFEYAGKNNYCLQINPASSINPDHLTYFRFIGRFIAMALYHGKFIDTGFTLPFYKRMLNKRPTLKDLESIDPEFYNSIVWIKENNLEECGLELYFIQDMEILGKVTTHELKEGGESIRVTEENKEEYIMLLTDWRFTRGVEEQTKAFLDGFNEVAPLEWLRYFDEKELELMLCGMQEIDMSDWQKSTIYRHYTKNSKQIQWFWQVVKEMDNEKRIRLLQFVTGTCRLPVGGFAELIGSNGPQKFCIDKVGKETWLPRSHTCFNRLDLPPYKSYEQLREKLLYAIEETEGFGQE.

A C2 domain is found at 1–117; that stretch reads MASASSSRAG…KNNGGKMENM (117 aa). Residues 151-299 form a disordered region; that stretch reads VPNGSALTDG…QQLPAAAQAP (149 aa). Composition is skewed to polar residues over residues 152 to 171 and 200 to 210; these read PNGS…SSGT and SARTTPATGEQ. A Phosphoserine modification is found at Ser211. Polar residues-rich tracts occupy residues 222 to 243 and 263 to 272; these read VKNS…TTAT and VTPNPNTTSL. Positions 290–299 are enriched in low complexity; the sequence is QQLPAAAQAP. WW domains are found at residues 300–333, 330–363, 405–437, and 444–477; these read DALP…RPLP, RPLP…RPTA, GPLP…DPRT, and PALP…DPRP. The region spanning 536–870 is the HECT domain; it reads KPYDLRRRLY…IEETEGFGQE (335 aa). Cys838 acts as the Glycyl thioester intermediate in catalysis.

As to quaternary structure, interacts with POU5F1, RBP1, EGR2 and SLC11A2. Interacts with SCNN1A, SCNN1B, SCNN1G, WBP1, WBP2 and ATN1. Interacts with ERBB4, NDFIP1 and NDFIP2. Interacts with ARRDC4. Interacts (via WW domains) with ARRDC1 (via PPxY motifs); ubiquitinates ARRDC1. Interacts (via WW domains) with ARRDC2 and ARRDC3. (Microbial infection) Interacts with adenovirus type 2 PIII. Post-translationally, autoubiquitinated. Ubiquitinated by the SCF(FBXL15) complex, leading to its degradation by the proteasome. Detected in heart, throughout the brain, placenta, lung, liver, muscle, kidney and pancreas. Also detected in spleen and peripheral blood leukocytes.

It localises to the nucleus. It catalyses the reaction S-ubiquitinyl-[E2 ubiquitin-conjugating enzyme]-L-cysteine + [acceptor protein]-L-lysine = [E2 ubiquitin-conjugating enzyme]-L-cysteine + N(6)-ubiquitinyl-[acceptor protein]-L-lysine.. Its pathway is protein modification; protein ubiquitination. With respect to regulation, activated by NDFIP1- and NDFIP2-binding. Functionally, E3 ubiquitin-protein ligase which accepts ubiquitin from an E2 ubiquitin-conjugating enzyme in the form of a thioester and then directly transfers the ubiquitin to targeted substrates. Polyubiquitinates POU5F1 by 'Lys-63'-linked conjugation and promotes it to proteasomal degradation; in embryonic stem cells (ESCs) the ubiquitination is proposed to regulate POU5F1 protein level. Ubiquitinates EGR2 and promotes it to proteasomal degradation; in T-cells the ubiquitination inhibits activation-induced cell death. Ubiquitinates SLC11A2; the ubiquitination is enhanced by presence of NDFIP1 and NDFIP2. Ubiquitinates RPB1 and promotes it to proteasomal degradation. This Homo sapiens (Human) protein is NEDD4-like E3 ubiquitin-protein ligase WWP2 (WWP2).